The primary structure comprises 261 residues: Zinc import ATP-binding protein ZnuC (261 aa).

The ABC transporter domain occupies 6–221; the sequence is IRLEKVAVRF…PAFVELFGNN (216 aa). 38–45 is an ATP binding site; sequence GPNGAGKT.

It belongs to the ABC transporter superfamily. Zinc importer (TC 3.A.1.15.5) family. The complex is composed of two ATP-binding proteins (ZnuC), two transmembrane proteins (ZnuB) and a solute-binding protein (ZnuA).

It localises to the cell inner membrane. The catalysed reaction is Zn(2+)(out) + ATP(in) + H2O(in) = Zn(2+)(in) + ADP(in) + phosphate(in) + H(+)(in). Its function is as follows. Part of the ABC transporter complex ZnuABC involved in zinc import. Responsible for energy coupling to the transport system. The sequence is that of Zinc import ATP-binding protein ZnuC from Pseudomonas fluorescens (strain Pf0-1).